The sequence spans 611 residues: Translation initiation factor RLI1 (611 aa).

4Fe-4S ferredoxin-type domains lie at 7–31 (RVAI…SCPV) and 46–75 (RIAF…IINL). 2 consecutive ABC transporter domains span residues 77-318 (TNLE…FLDG) and 345-565 (AEKS…LKNL). ATP contacts are provided by residues 110-117 (GTNGIGKS) and 382-389 (GENGTGKT).

It belongs to the ABC transporter superfamily. ABCE family. In terms of assembly, component of the multifactor complex (MFC). The complex associates with pre-initiation complexes.

It is found in the cytoplasm. It localises to the nucleus. Component of the multifactor complex (MFC) involved in translation initiation. Required for the binding of MFC to the 40S ribosome. Required for the processing and nuclear export of the 60S and 40S ribosomal subunits. This Chaetomium thermophilum (strain DSM 1495 / CBS 144.50 / IMI 039719) (Thermochaetoides thermophila) protein is Translation initiation factor RLI1 (RLI1).